Here is a 261-residue protein sequence, read N- to C-terminus: uncharacterized protein (261 aa).

Glu-46 is a catalytic residue.

Belongs to the PhzF family.

This is an uncharacterized protein from Pseudomonas aeruginosa (strain ATCC 15692 / DSM 22644 / CIP 104116 / JCM 14847 / LMG 12228 / 1C / PRS 101 / PAO1).